We begin with the raw amino-acid sequence, 100 residues long: Protein Tat (100 aa).

Residues 1-20 are disordered; it reads MEPVNPSLEPWKHPGSQPKT. An interaction with human CREBBP region spans residues 1-24; it reads MEPVNPSLEPWKHPGSQPKTACTN. A transactivation region spans residues 1 to 48; the sequence is MEPVNPSLEPWKHPGSQPKTACTNCYCKKCCFHCQACFITKGLGISYG. Cys-22, Cys-25, and Cys-27 together coordinate Zn(2+). The tract at residues 22–37 is cysteine-rich; sequence CTNCYCKKCCFHCQAC. The residue at position 28 (Lys-28) is an N6-acetyllysine; by host PCAF. Zn(2+)-binding residues include Cys-30, His-33, Cys-34, and Cys-37. The core stretch occupies residues 38–48; that stretch reads FITKGLGISYG. The interval 47 to 100 is disordered; it reads YGRKKRRQRRRPPQDSQTHQVSLSKPSSQPRGDPTGPKEQKKKVERETETDPVH. Residues 48–57 show a composition bias toward basic residues; sequence GRKKRRQRRR. The Nuclear localization signal, RNA-binding (TAR), and protein transduction signature appears at 49 to 57; the sequence is RKKRRQRRR. The interval 49 to 85 is interaction with the host capping enzyme RNGTT; that stretch reads RKKRRQRRRPPQDSQTHQVSLSKPSSQPRGDPTGPKE. N6-acetyllysine; by host EP300 and GCN5L2 occurs at positions 50 and 51. An asymmetric dimethylarginine; by host PRMT6 mark is found at Arg-52 and Arg-53. Residues 61–76 are compositionally biased toward polar residues; the sequence is DSQTHQVSLSKPSSQP. A Glycyl lysine isopeptide (Lys-Gly) (interchain with G-Cter in ubiquitin) cross-link involves residue Lys-71. Positions 77–79 match the Cell attachment site motif; it reads RGD. Over residues 82–100 the composition is skewed to basic and acidic residues; that stretch reads GPKEQKKKVERETETDPVH.

This sequence belongs to the lentiviruses Tat family. Interacts with host CCNT1. Associates with the P-TEFb complex composed at least of Tat, P-TEFb (CDK9 and CCNT1), TAR RNA, RNA Pol II. Recruits the HATs CREBBP, TAF1/TFIID, EP300, PCAF and GCN5L2. Interacts with host KAT5/Tip60; this interaction targets the latter to degradation. Interacts with the host deacetylase SIRT1. Interacts with host capping enzyme RNGTT; this interaction stimulates RNGTT. Binds to host KDR, and to the host integrins ITGAV/ITGB3 and ITGA5/ITGB1. Interacts with host KPNB1/importin beta-1 without previous binding to KPNA1/importin alpha-1. Interacts with EIF2AK2. Interacts with host nucleosome assembly protein NAP1L1; this interaction may be required for the transport of Tat within the nucleus, since the two proteins interact at the nuclear rim. Interacts with host C1QBP/SF2P32; this interaction involves lysine-acetylated Tat. Interacts with the host chemokine receptors CCR2, CCR3 and CXCR4. Interacts with host DPP4/CD26; this interaction may trigger an anti-proliferative effect. Interacts with host LDLR. Interacts with the host extracellular matrix metalloproteinase MMP1. Interacts with host PRMT6; this interaction mediates Tat's methylation. Interacts with, and is ubiquitinated by MDM2/Hdm2. Interacts with host PSMC3 and HTATIP2. Interacts with STAB1; this interaction may overcome SATB1-mediated repression of IL2 and IL2RA (interleukin) in T cells by binding to the same domain than HDAC1. Interacts (when acetylated) with human CDK13, thereby increasing HIV-1 mRNA splicing and promoting the production of the doubly spliced HIV-1 protein Nef. Interacts with host TBP; this interaction modulates the activity of transcriptional pre-initiation complex. Interacts with host RELA. Interacts with host PLSCR1; this interaction negatively regulates Tat transactivation activity by altering its subcellular distribution. Asymmetrical arginine methylation by host PRMT6 seems to diminish the transactivation capacity of Tat and affects the interaction with host CCNT1. Post-translationally, acetylation by EP300, CREBBP, GCN5L2/GCN5 and PCAF regulates the transactivation activity of Tat. EP300-mediated acetylation of Lys-50 promotes dissociation of Tat from the TAR RNA through the competitive binding to PCAF's bromodomain. In addition, the non-acetylated Tat's N-terminus can also interact with PCAF. PCAF-mediated acetylation of Lys-28 enhances Tat's binding to CCNT1. Lys-50 is deacetylated by SIRT1. In terms of processing, polyubiquitination by host MDM2 does not target Tat to degradation, but activates its transactivation function and fosters interaction with CCNT1 and TAR RNA. Phosphorylated by EIF2AK2 on serine and threonine residues adjacent to the basic region important for TAR RNA binding and function. Phosphorylation of Tat by EIF2AK2 is dependent on the prior activation of EIF2AK2 by dsRNA.

Its subcellular location is the host nucleus. It localises to the host nucleolus. It is found in the host cytoplasm. The protein resides in the secreted. Transcriptional activator that increases RNA Pol II processivity, thereby increasing the level of full-length viral transcripts. Recognizes a hairpin structure at the 5'-LTR of the nascent viral mRNAs referred to as the transactivation responsive RNA element (TAR) and recruits the cyclin T1-CDK9 complex (P-TEFb complex) that will in turn hyperphosphorylate the RNA polymerase II to allow efficient elongation. The CDK9 component of P-TEFb and other Tat-activated kinases hyperphosphorylate the C-terminus of RNA Pol II that becomes stabilized and much more processive. Other factors such as HTATSF1/Tat-SF1, SUPT5H/SPT5, and HTATIP2 are also important for Tat's function. Besides its effect on RNA Pol II processivity, Tat induces chromatin remodeling of proviral genes by recruiting the histone acetyltransferases (HATs) CREBBP, EP300 and PCAF to the chromatin. This also contributes to the increase in proviral transcription rate, especially when the provirus integrates in transcriptionally silent region of the host genome. To ensure maximal activation of the LTR, Tat mediates nuclear translocation of NF-kappa-B by interacting with host RELA. Through its interaction with host TBP, Tat may also modulate transcription initiation. Tat can reactivate a latently infected cell by penetrating in it and transactivating its LTR promoter. In the cytoplasm, Tat is thought to act as a translational activator of HIV-1 mRNAs. Its function is as follows. Extracellular circulating Tat can be endocytosed by surrounding uninfected cells via the binding to several surface receptors such as CD26, CXCR4, heparan sulfate proteoglycans (HSPG) or LDLR. Neurons are rarely infected, but they internalize Tat via their LDLR. Through its interaction with nuclear HATs, Tat is potentially able to control the acetylation-dependent cellular gene expression. Modulates the expression of many cellular genes involved in cell survival, proliferation or in coding for cytokines or cytokine receptors. Tat plays a role in T-cell and neurons apoptosis. Tat induced neurotoxicity and apoptosis probably contribute to neuroAIDS. Circulating Tat also acts as a chemokine-like and/or growth factor-like molecule that binds to specific receptors on the surface of the cells, affecting many cellular pathways. In the vascular system, Tat binds to ITGAV/ITGB3 and ITGA5/ITGB1 integrins dimers at the surface of endothelial cells and competes with bFGF for heparin-binding sites, leading to an excess of soluble bFGF. This is Protein Tat from Homo sapiens (Human).